Consider the following 246-residue polypeptide: Small ribosomal subunit protein uS3 (246 aa).

In terms of domain architecture, KH type-2 spans 23-94 (LNEFLTRELA…RIELYAEKVA (72 aa)). A disordered region spans residues 201–246 (GPKKPLPDNVSVVEPKEEKIYETPETEYKIPPPSKPLDDLSEAKVL). 2 stretches are compositionally biased toward basic and acidic residues: residues 214 to 228 (EPKEEKIYETPETEY) and 236 to 246 (PLDDLSEAKVL). Residues Thr-223 and Thr-226 each carry the phosphothreonine modification. Ser-241 carries the phosphoserine modification.

It belongs to the universal ribosomal protein uS3 family. In terms of assembly, interacts with LTV1; the interaction is RNA-independent.

It localises to the cytoplasm. The protein localises to the nucleus. Functionally, has DNA repair activity directed towards the mutagenic lesions 8-oxoguanine and abasic sites in DNA. It can cleave DNA containing 8-oxoguanine residues efficiently. Also acts as an ap lyase, cleaving phosphodiester bonds via a beta,delta elimination reaction. The protein is Small ribosomal subunit protein uS3 (RpS3) of Drosophila melanogaster (Fruit fly).